We begin with the raw amino-acid sequence, 655 residues long: D-xylonate dehydratase YjhG (655 aa).

The protein belongs to the IlvD/Edd family.

The enzyme catalyses D-xylonate = 2-dehydro-3-deoxy-D-arabinonate + H2O. With respect to regulation, activity is increased in the presence of Mn(+) and Mg(2+). Inhibited by thiol compounds. Its function is as follows. Catalyzes the dehydration of D-xylonic acid to form 2-dehydro-3-deoxy-D-pentonate. The polypeptide is D-xylonate dehydratase YjhG (yjhG) (Escherichia coli (strain K12)).